The chain runs to 294 residues: 33 kDa chaperonin (294 aa).

Intrachain disulfides connect C239-C241 and C272-C275.

This sequence belongs to the HSP33 family. Under oxidizing conditions two disulfide bonds are formed involving the reactive cysteines. Under reducing conditions zinc is bound to the reactive cysteines and the protein is inactive.

It is found in the cytoplasm. In terms of biological role, redox regulated molecular chaperone. Protects both thermally unfolding and oxidatively damaged proteins from irreversible aggregation. Plays an important role in the bacterial defense system toward oxidative stress. This is 33 kDa chaperonin from Listeria monocytogenes serotype 4b (strain CLIP80459).